A 673-amino-acid polypeptide reads, in one-letter code: Flotillin family inner membrane protein sll1021 (673 aa).

The chain crosses the membrane as a helical span at residues 60–80 (LLFFPVVIIAVIFLILVTIFL). A disordered region spans residues 639-673 (LQDPPSVSPPSAAVSEDDWPDLAPPTETNFSPEEI). Over residues 664 to 673 (TETNFSPEEI) the composition is skewed to polar residues.

It belongs to the band 7/mec-2 family. Flotillin subfamily. As to quaternary structure, homooligomerizes.

The protein localises to the cell inner membrane. Its subcellular location is the membrane raft. In terms of biological role, found in functional membrane microdomains (FMM) that may be equivalent to eukaryotic membrane rafts. FMMs are highly dynamic and increase in number as cells age. Flotillins are thought to be important factors in membrane fluidity. In Synechocystis sp. (strain ATCC 27184 / PCC 6803 / Kazusa), this protein is Flotillin family inner membrane protein sll1021.